A 707-amino-acid chain; its full sequence is Dendrin (707 aa).

Disordered stretches follow at residues 1–22 (MLDG…DEES), 67–86 (QNRT…RRPW), 94–195 (ATNW…PWGG), 213–273 (AGTA…KKRL), and 342–377 (TEVA…GSEE). The stretch at 103-134 (AEVRAREQEKRKAASQEREAKETERKRRKAGG) forms a coiled coil. The segment covering 105 to 127 (VRAREQEKRKAASQEREAKETER) has biased composition (basic and acidic residues). Residues 113–131 (RKAASQEREAKETERKRRK) form a nuclear localization region. The interaction with MAGI2 stretch occupies residues 186–236 (GVAWAGPWGGRRPGPPSYEAHLLLRGAAGTAPRRRWDRPPPYVAPPSYEGP). The interval 340-434 (PVTEVALSGS…LEVWKVTRRA (95 aa)) is interaction with ACTN1. Over residues 359 to 369 (PRSRQHLRGSR) the composition is skewed to basic residues. S387 is modified (phosphoserine). Disordered regions lie at residues 389-421 (KKPP…EGTE) and 517-707 (RVLN…GKRE). The interaction with CD2AP and NPHS1 stretch occupies residues 406-707 (GGTGWKESLG…TRKTPQGKRE (302 aa)). Composition is skewed to basic and acidic residues over residues 524–544 (EGRE…EERS) and 692–707 (GLVR…GKRE).

Forms a ternary complex with MAGI2 and SH3KBP1; recruits DDN to the cytoplasm. Interacts with MAGI1. Interacts with ACTN1 and may interact with WWC1. Interacts with the podocyte slit diaphragm proteins CD2AP, NPHS1 and NPHS2; the interaction with CD2AP and NPHS1 is direct. As to expression, specifically expressed in forebrain structures, particularly in neocortex, olfactory bulb, hippocampus, caudate-putamen, and limbic system (at protein level). Also detected in spleen, liver, kidney and placenta (at protein level).

Its subcellular location is the cell projection. The protein localises to the dendritic spine membrane. It is found in the cytoplasm. The protein resides in the endoplasmic reticulum membrane. It localises to the perikaryon. Its subcellular location is the nucleus. Functionally, promotes apoptosis of kidney glomerular podocytes. Podocytes are highly specialized cells essential to the ultrafiltration of blood, resulting in the extraction of urine and the retention of protein. In Rattus norvegicus (Rat), this protein is Dendrin (Ddn).